Consider the following 132-residue polypeptide: Small ribosomal subunit protein uS8 (132 aa).

This sequence belongs to the universal ribosomal protein uS8 family. As to quaternary structure, part of the 30S ribosomal subunit. Contacts proteins S5 and S12.

Functionally, one of the primary rRNA binding proteins, it binds directly to 16S rRNA central domain where it helps coordinate assembly of the platform of the 30S subunit. The sequence is that of Small ribosomal subunit protein uS8 from Clostridium botulinum (strain Alaska E43 / Type E3).